A 712-amino-acid chain; its full sequence is Frizzled-6 (712 aa).

The signal sequence occupies residues 1-18 (MEMFTFLLTCVFLPFVRG). The FZ domain occupies 19–132 (HSLFTCEPIT…CDRLQYCDET (114 aa)). The Extracellular portion of the chain corresponds to 19–201 (HSLFTCEPIT…SDELEFAKSF (183 aa)). 5 disulfide bridges follow: Cys-24–Cys-85, Cys-32–Cys-78, Cys-69–Cys-106, Cys-95–Cys-129, and Cys-99–Cys-123. An N-linked (GlcNAc...) asparagine glycan is attached at Asn-38. The chain crosses the membrane as a helical span at residues 202–222 (IGIVSIFCLCATLFTFLTFLI). Residues 223–233 (DVKRFRYPERP) lie on the Cytoplasmic side of the membrane. A helical transmembrane segment spans residues 234–254 (IIYYSVCYSIVSLMYFIGFLL). Residues 255–284 (GDRTACNKADEKLELGDTVVLGSQNKACTV) lie on the Extracellular side of the membrane. The helical transmembrane segment at 285–305 (LFMFLYFFTMAGTVWWVILTI) threads the bilayer. At 306–324 (TWFLAAGRKWSCEAIEQKA) the chain is on the cytoplasmic side. A helical membrane pass occupies residues 325–345 (VWFHAVAWGIPGFLTVMLLAM). The Extracellular segment spans residues 346 to 370 (NKVEGDNISGVCFVGLYDLDASRYF). The N-linked (GlcNAc...) asparagine glycan is linked to Asn-352. Residues 371-391 (VLLPLCLCVFVGLSLLLAGII) form a helical membrane-spanning segment. Over 392 to 416 (SLNHVRQVIQHDGRNQEKLKKFMIR) the chain is Cytoplasmic. The helical transmembrane segment at 417–437 (IGVFSGLYLVPLVTLLGCYVY) threads the bilayer. Over 438–473 (EQVNRITWEITWVSDHCRQYHIPCPYQAKTETRPEL) the chain is Extracellular. A helical membrane pass occupies residues 474–494 (ALFMIKYLMTLIVGISAVFWV). At 495-712 (GSKKTCTEWA…EHGTGSHSDT (218 aa)) the chain is on the cytoplasmic side. A Lys-Thr-X-X-X-Trp motif, mediates interaction with the PDZ domain of Dvl family members motif is present at residues 498–503 (KTCTEW). Positions 588 to 712 (EIQTSPETSV…EHGTGSHSDT (125 aa)) are disordered. 2 stretches are compositionally biased toward basic and acidic residues: residues 628–637 (LCEEQADRKG) and 652–664 (TRSE…KSDV). Positions 668-693 (GPMQSSSLQVPGSSEPGSLKGSTSLL) are enriched in polar residues. Positions 700–712 (GRKEHGTGSHSDT) are enriched in basic and acidic residues.

Belongs to the G-protein coupled receptor Fz/Smo family. Interacts with LMBR1L. Post-translationally, ubiquitinated by ZNRF3, leading to its degradation by the proteasome.

The protein localises to the membrane. The protein resides in the cell membrane. Its subcellular location is the cell surface. It is found in the apical cell membrane. It localises to the cytoplasmic vesicle membrane. The protein localises to the endoplasmic reticulum membrane. Receptor for Wnt proteins. Most of frizzled receptors are coupled to the beta-catenin canonical signaling pathway, which leads to the activation of disheveled proteins, inhibition of GSK-3 kinase, nuclear accumulation of beta-catenin and activation of Wnt target genes. A second signaling pathway involving PKC and calcium fluxes has been seen for some family members, but it is not yet clear if it represents a distinct pathway or if it can be integrated in the canonical pathway, as PKC seems to be required for Wnt-mediated inactivation of GSK-3 kinase. Both pathways seem to involve interactions with G-proteins. Activation by Wnt5A stimulates PKC activity via a G-protein-dependent mechanism. Involved in transduction and intercellular transmission of polarity information during tissue morphogenesis and/or in differentiated tissues. Together with FZD3, is involved in the neural tube closure and plays a role in the regulation of the establishment of planar cell polarity (PCP), particularly in the orientation of asymmetric bundles of stereocilia on the apical faces of a subset of auditory and vestibular sensory cells located in the inner ear. This chain is Frizzled-6 (FZD6), found in Canis lupus familiaris (Dog).